We begin with the raw amino-acid sequence, 175 residues long: CDP-archaeol synthase (175 aa).

The next 4 helical transmembrane spans lie at 41–61 (GLFSGIFCGFLAGCIEIWLSM), 78–98 (YASALIVVLALPSGALFGDMF), 122–142 (FVVGAWFFTYLAAPEWFVSNF), and 150–170 (VLIMTPLLHLTTNIIGYFIGV).

The protein belongs to the CDP-archaeol synthase family. The cofactor is Mg(2+).

It localises to the cell membrane. The enzyme catalyses 2,3-bis-O-(geranylgeranyl)-sn-glycerol 1-phosphate + CTP + H(+) = CDP-2,3-bis-O-(geranylgeranyl)-sn-glycerol + diphosphate. It functions in the pathway membrane lipid metabolism; glycerophospholipid metabolism. Catalyzes the formation of CDP-2,3-bis-(O-geranylgeranyl)-sn-glycerol (CDP-archaeol) from 2,3-bis-(O-geranylgeranyl)-sn-glycerol 1-phosphate (DGGGP) and CTP. This reaction is the third ether-bond-formation step in the biosynthesis of archaeal membrane lipids. This is CDP-archaeol synthase from Methanosarcina acetivorans (strain ATCC 35395 / DSM 2834 / JCM 12185 / C2A).